A 166-amino-acid polypeptide reads, in one-letter code: Putative esterase sll0410 (166 aa).

Aspartate 45 is an active-site residue.

It belongs to the 4-hydroxybenzoyl-CoA thioesterase family.

This chain is Putative esterase sll0410, found in Synechocystis sp. (strain ATCC 27184 / PCC 6803 / Kazusa).